The sequence spans 28 residues: M-poneritoxin-Da4b (28 aa).

Ala28 is subject to Alanine amide.

In terms of tissue distribution, expressed by the venom gland.

It is found in the secreted. Functionally, the synthetic peptide has antimicrobial activity against the Gram-positive bacteria B.amyloliquefacies S499 (MIC=0.05 mM), L.monocytogenes 2231 and S.aureus ATCC 29213, against the Gram-negative bacteria P.putida BTP1, P.aeruginosa PaO1 and E.coli ATCC 10536, and against the fungi S.cerevisiae, R.mucilaginosa and C.cucumerinum. It is not active against the fungi F.oxysporum and B.cinerea. The chain is M-poneritoxin-Da4b from Dinoponera australis (Giant neotropical hunting ant).